The following is a 1368-amino-acid chain: DNA-directed RNA polymerase subunit beta (1368 aa).

This sequence belongs to the RNA polymerase beta chain family. The RNAP catalytic core consists of 2 alpha, 1 beta, 1 beta' and 1 omega subunit. When a sigma factor is associated with the core the holoenzyme is formed, which can initiate transcription.

It catalyses the reaction RNA(n) + a ribonucleoside 5'-triphosphate = RNA(n+1) + diphosphate. Functionally, DNA-dependent RNA polymerase catalyzes the transcription of DNA into RNA using the four ribonucleoside triphosphates as substrates. This is DNA-directed RNA polymerase subunit beta from Burkholderia ambifaria (strain MC40-6).